Here is a 74-residue protein sequence, read N- to C-terminus: MKQSFYRYLMTQRDPNNYEPVAQFANNAFFDQSFPKHEGDYELLSQYLELNGSYLPSMLIFDEAYQLYQESEQA.

This sequence belongs to the UPF0346 family.

This is UPF0346 protein LCA_0996 from Latilactobacillus sakei subsp. sakei (strain 23K) (Lactobacillus sakei subsp. sakei).